A 28-amino-acid chain; its full sequence is YCQKFLWTCDSERPCCEGLVCRLWCKIN.

3 disulfide bridges follow: C2–C16, C9–C21, and C15–C25. Asparagine amide is present on N28.

Belongs to the neurotoxin 30 (phrixotoxin) family. As to expression, expressed by the venom gland.

The protein localises to the secreted. Functionally, potent and selective inhibitor of Nav1.7/SCN9A sodium channels. Inhibits Nav1.7/SCN9A peak current (IC(50)=13 nM). In vivo, does not induce visible signs of toxicity when intravenously injected into mice. This Homoeomma sp. (Peruvian tarantula) protein is Mu-theraphotoxin-Hsp1a.